The primary structure comprises 506 residues: Maturase K (506 aa).

Belongs to the intron maturase 2 family. MatK subfamily.

It localises to the plastid. The protein localises to the chloroplast. Functionally, usually encoded in the trnK tRNA gene intron. Probably assists in splicing its own and other chloroplast group II introns. The chain is Maturase K from Arabis alpina (Alpine rock-cress).